The sequence spans 166 residues: Lipoprotein signal peptidase (166 aa).

Helical transmembrane passes span 12–32, 66–86, and 101–121; these read LPIALFILVALVADQAIKYLV, MEGWFIVGMRLAVVAFVLWLW, and AMIIAGALGNLVDRLLFGYVI. Residues Asp122 and Asp140 contribute to the active site. The helical transmembrane segment at 132 to 152 threads the bilayer; it reads SFAVFNLADSFITVGAGAIIL.

The protein belongs to the peptidase A8 family.

The protein localises to the cell inner membrane. The catalysed reaction is Release of signal peptides from bacterial membrane prolipoproteins. Hydrolyzes -Xaa-Yaa-Zaa-|-(S,diacylglyceryl)Cys-, in which Xaa is hydrophobic (preferably Leu), and Yaa (Ala or Ser) and Zaa (Gly or Ala) have small, neutral side chains.. It functions in the pathway protein modification; lipoprotein biosynthesis (signal peptide cleavage). Functionally, this protein specifically catalyzes the removal of signal peptides from prolipoproteins. This is Lipoprotein signal peptidase from Sinorhizobium fredii (strain NBRC 101917 / NGR234).